Reading from the N-terminus, the 216-residue chain is ATP phosphoribosyltransferase (216 aa).

Belongs to the ATP phosphoribosyltransferase family. Short subfamily. Heteromultimer composed of HisG and HisZ subunits.

It is found in the cytoplasm. The enzyme catalyses 1-(5-phospho-beta-D-ribosyl)-ATP + diphosphate = 5-phospho-alpha-D-ribose 1-diphosphate + ATP. It participates in amino-acid biosynthesis; L-histidine biosynthesis; L-histidine from 5-phospho-alpha-D-ribose 1-diphosphate: step 1/9. Its function is as follows. Catalyzes the condensation of ATP and 5-phosphoribose 1-diphosphate to form N'-(5'-phosphoribosyl)-ATP (PR-ATP). Has a crucial role in the pathway because the rate of histidine biosynthesis seems to be controlled primarily by regulation of HisG enzymatic activity. The sequence is that of ATP phosphoribosyltransferase from Nitrosomonas eutropha (strain DSM 101675 / C91 / Nm57).